A 171-amino-acid polypeptide reads, in one-letter code: 3-hydroxydecanoyl-[acyl-carrier-protein] dehydratase (171 aa).

His-70 is an active-site residue.

The protein belongs to the thioester dehydratase family. FabA subfamily. In terms of assembly, homodimer.

It is found in the cytoplasm. It carries out the reaction a (3R)-hydroxyacyl-[ACP] = a (2E)-enoyl-[ACP] + H2O. The enzyme catalyses (3R)-hydroxydecanoyl-[ACP] = (2E)-decenoyl-[ACP] + H2O. It catalyses the reaction (2E)-decenoyl-[ACP] = (3Z)-decenoyl-[ACP]. It functions in the pathway lipid metabolism; fatty acid biosynthesis. Necessary for the introduction of cis unsaturation into fatty acids. Catalyzes the dehydration of (3R)-3-hydroxydecanoyl-ACP to E-(2)-decenoyl-ACP and then its isomerization to Z-(3)-decenoyl-ACP. Can catalyze the dehydratase reaction for beta-hydroxyacyl-ACPs with saturated chain lengths up to 16:0, being most active on intermediate chain length. The polypeptide is 3-hydroxydecanoyl-[acyl-carrier-protein] dehydratase (Stenotrophomonas maltophilia (strain R551-3)).